The sequence spans 196 residues: Thymidine kinase (196 aa).

Residues 9-16 and 87-90 contribute to the ATP site; these read SAMNAGKS and DECQ. The active-site Proton acceptor is Glu-88. Zn(2+)-binding residues include Cys-145, Cys-147, Cys-182, and His-185.

It belongs to the thymidine kinase family. Homotetramer.

The protein localises to the cytoplasm. It catalyses the reaction thymidine + ATP = dTMP + ADP + H(+). The sequence is that of Thymidine kinase from Yersinia pestis.